Here is a 172-residue protein sequence, read N- to C-terminus: MGRRLGRVAALLLGLLVECTEAKKHCWYFEGLYPTYYICRSYEDCCGSRCCVRALSIQRLWYFWFLLMMGVLFCCGAGFFIRRRMYPPPLIEEPTFNVSYTRQPPNPAPGAQQMGPPYYTDPGGPGMNPVGNTMAMAFQVQPNSPHGGTTYPPPPSYCNTPPPPYEQVVKDK.

The signal sequence occupies residues 1 to 22 (MGRRLGRVAALLLGLLVECTEA). Residues 23-60 (KKHCWYFEGLYPTYYICRSYEDCCGSRCCVRALSIQRL) lie on the Extracellular side of the membrane. The helical transmembrane segment at 61-81 (WYFWFLLMMGVLFCCGAGFFI) threads the bilayer. The Cytoplasmic segment spans residues 82-172 (RRRMYPPPLI…PPYEQVVKDK (91 aa)). Residues 139-172 (QVQPNSPHGGTTYPPPPSYCNTPPPPYEQVVKDK) are disordered. The segment covering 151 to 165 (YPPPPSYCNTPPPPY) has biased composition (pro residues).

It belongs to the VOPP1/ECOP family. As to quaternary structure, interacts with WWOX (via WW domain).

It is found in the cytoplasmic vesicle membrane. It localises to the late endosome membrane. The protein localises to the lysosome membrane. Increases the transcriptional activity of NFKB1 by facilitating its nuclear translocation, DNA-binding and associated apoptotic response, when overexpressed. May sequester WWOX in lysosomal vesicles and thereby regulate WWOX role as tumor suppressor. The sequence is that of WW domain binding protein VOPP1 (Vopp1) from Mus musculus (Mouse).